A 162-amino-acid chain; its full sequence is Probable chemoreceptor glutamine deamidase CheD (162 aa).

Belongs to the CheD family.

The catalysed reaction is L-glutaminyl-[protein] + H2O = L-glutamyl-[protein] + NH4(+). In terms of biological role, probably deamidates glutamine residues to glutamate on methyl-accepting chemotaxis receptors (MCPs), playing an important role in chemotaxis. In Clostridium kluyveri (strain ATCC 8527 / DSM 555 / NBRC 12016 / NCIMB 10680 / K1), this protein is Probable chemoreceptor glutamine deamidase CheD.